The chain runs to 273 residues: 4-hydroxy-tetrahydrodipicolinate reductase 1 (273 aa).

NAD(+) is bound by residues 13-18 (GAAGRM) and E39. R40 is an NADP(+) binding site. NAD(+) contacts are provided by residues 103–105 (GTT) and 127–130 (SGNM). H161 (proton donor/acceptor) is an active-site residue. H162 provides a ligand contact to (S)-2,3,4,5-tetrahydrodipicolinate. The active-site Proton donor is K165. A (S)-2,3,4,5-tetrahydrodipicolinate-binding site is contributed by 171 to 172 (GT).

The protein belongs to the DapB family.

The protein resides in the cytoplasm. The catalysed reaction is (S)-2,3,4,5-tetrahydrodipicolinate + NAD(+) + H2O = (2S,4S)-4-hydroxy-2,3,4,5-tetrahydrodipicolinate + NADH + H(+). It catalyses the reaction (S)-2,3,4,5-tetrahydrodipicolinate + NADP(+) + H2O = (2S,4S)-4-hydroxy-2,3,4,5-tetrahydrodipicolinate + NADPH + H(+). The protein operates within amino-acid biosynthesis; L-lysine biosynthesis via DAP pathway; (S)-tetrahydrodipicolinate from L-aspartate: step 4/4. In terms of biological role, catalyzes the conversion of 4-hydroxy-tetrahydrodipicolinate (HTPA) to tetrahydrodipicolinate. The polypeptide is 4-hydroxy-tetrahydrodipicolinate reductase 1 (Mesorhizobium japonicum (strain LMG 29417 / CECT 9101 / MAFF 303099) (Mesorhizobium loti (strain MAFF 303099))).